A 364-amino-acid chain; its full sequence is Probable dual-specificity RNA methyltransferase RlmN (364 aa).

Residue glutamate 107 is the Proton acceptor of the active site. Positions 113–346 (HNYGNSVCVT…VTIRREHGHD (234 aa)) constitute a Radical SAM core domain. An intrachain disulfide couples cysteine 120 to cysteine 351. Residues cysteine 127, cysteine 131, and cysteine 134 each coordinate [4Fe-4S] cluster. S-adenosyl-L-methionine-binding positions include 177-178 (GE), serine 209, 232-234 (SLH), and asparagine 308. The active-site S-methylcysteine intermediate is the cysteine 351.

It belongs to the radical SAM superfamily. RlmN family. It depends on [4Fe-4S] cluster as a cofactor.

Its subcellular location is the cytoplasm. It catalyses the reaction adenosine(2503) in 23S rRNA + 2 reduced [2Fe-2S]-[ferredoxin] + 2 S-adenosyl-L-methionine = 2-methyladenosine(2503) in 23S rRNA + 5'-deoxyadenosine + L-methionine + 2 oxidized [2Fe-2S]-[ferredoxin] + S-adenosyl-L-homocysteine. The catalysed reaction is adenosine(37) in tRNA + 2 reduced [2Fe-2S]-[ferredoxin] + 2 S-adenosyl-L-methionine = 2-methyladenosine(37) in tRNA + 5'-deoxyadenosine + L-methionine + 2 oxidized [2Fe-2S]-[ferredoxin] + S-adenosyl-L-homocysteine. In terms of biological role, specifically methylates position 2 of adenine 2503 in 23S rRNA and position 2 of adenine 37 in tRNAs. In Geobacillus thermodenitrificans (strain NG80-2), this protein is Probable dual-specificity RNA methyltransferase RlmN.